Consider the following 47-residue polypeptide: GGIAIYWGQNGNEGTLTQTCNTGKYSYVNIAFLNKFGNGQTPEINLA.

Residues 1–47 form the GH18 domain; the sequence is GGIAIYWGQNGNEGTLTQTCNTGKYSYVNIAFLNKFGNGQTPEINLA.

It belongs to the glycosyl hydrolase 18 family. Chitinase class II subfamily.

It is found in the secreted. Its subcellular location is the extracellular space. The catalysed reaction is Random endo-hydrolysis of N-acetyl-beta-D-glucosaminide (1-&gt;4)-beta-linkages in chitin and chitodextrins.. It carries out the reaction Hydrolysis of (1-&gt;4)-beta-linkages between N-acetylmuramic acid and N-acetyl-D-glucosamine residues in a peptidoglycan and between N-acetyl-D-glucosamine residues in chitodextrins.. Bifunctional enzyme with lysozyme/chitinase activity. This is Bifunctional chitinase/lysozyme from Parthenocissus quinquefolia (Virginia creeper).